The primary structure comprises 427 residues: Beta-1,3-galactosyl-O-glycosyl-glycoprotein beta-1,6-N-acetylglucosaminyltransferase (427 aa).

Over 1-9 (MLRKLWRRK) the chain is Cytoplasmic. The segment at 5 to 9 (LWRRK) is mediates interaction with GOLPH3 and is necessary and sufficient for localization to the Golgi. Residues 10–32 (LFSFPTKYYFLFLAFSVVTFTVL) form a helical; Signal-anchor for type II membrane protein membrane-spanning segment. The stem region stretch occupies residues 33–121 (RIHQKTEFVN…EPLSKEEAGF (89 aa)). The Lumenal portion of the chain corresponds to 33-427 (RIHQKTEFVN…RHKALETLKP (395 aa)). N-linked (GlcNAc...) asparagine glycans are attached at residues N58 and N95. Intrachain disulfides connect C59–C412, C100–C172, C151–C199, and C372–C380. Residues 122 to 427 (PIAYSIVVHH…RHKALETLKP (306 aa)) are catalytic. Residues 128-130 (VVH), 155-157 (DAK), and Y187 contribute to the UDP-N-acetyl-alpha-D-glucosamine site. A glycoprotein-binding residues include E243, K251, R254, E320, K341, and Y358. E320 acts as the Nucleophile in catalysis. UDP-N-acetyl-alpha-D-glucosamine contacts are provided by R377 and K400.

Belongs to the glycosyltransferase 14 family. As to quaternary structure, interacts with GOLPH3; may control GCNT1 retention in the Golgi. As to expression, expressed in tracheal submucosal glands and epithelium (at protein level).

It is found in the golgi apparatus membrane. It carries out the reaction a 3-O-[beta-D-galactosyl-(1-&gt;3)-N-acetyl-alpha-D-galactosaminyl]-L-seryl-[protein] + UDP-N-acetyl-alpha-D-glucosamine = 3-O-{beta-D-galactosyl-(1-&gt;3)-[N-acetyl-beta-D-glucosaminyl-(1-&gt;6)]-N-acetyl-alpha-D-galactosaminyl}-L-seryl-[protein] + UDP + H(+). The catalysed reaction is a 3-O-[beta-D-galactosyl-(1-&gt;3)-N-acetyl-alpha-D-galactosaminyl]-L-threonyl-[protein] + UDP-N-acetyl-alpha-D-glucosamine = a 3-O-{beta-D-galactosyl-(1-&gt;3)-[N-acetyl-beta-D-glucosaminyl-(1-&gt;6)]-N-acetyl-alpha-D-galactosaminyl}-L-threonyl-[protein] + UDP + H(+). It catalyses the reaction a globoside GalGb4Cer + UDP-N-acetyl-alpha-D-glucosamine = a globoside GlcNAc-(beta1-&gt;6)-GalGb4Cer + UDP + H(+). The enzyme catalyses a ganglioside GA1 + UDP-N-acetyl-alpha-D-glucosamine = a ganglioside beta-D-GlcNAc-(1-&gt;6)-GA1 + UDP + H(+). The protein operates within protein modification; protein glycosylation. Its pathway is glycolipid biosynthesis. Functionally, glycosyltransferase that catalyzes the transfer of an N-acetylglucosamine (GlcNAc) moiety in beta1-6 linkage from UDP-GlcNAc onto mucin-type core 1 O-glycan to form the branched mucin-type core 2 O-glycan. The catalysis is metal ion-independent and occurs with inversion of the anomeric configuration of sugar donor. Selectively involved in synthesis of mucin-type core 2 O-glycans that serve as scaffolds for the display of selectin ligand sialyl Lewis X epitope by myeloid cells, with an impact on homeostasis and recruitment to inflammatory sites. Can also act on glycolipid substrates. Transfers GlcNAc moiety to GalGb4Cer globosides in a reaction step to the synthesis of stage-specific embryonic antigen 1 (SSEA-1) determinant. Can use Galbeta1-3GalNAcalpha1- and Galbeta1-3GalNAcbeta1- oligosaccharide derivatives as acceptor substrates. In Bos taurus (Bovine), this protein is Beta-1,3-galactosyl-O-glycosyl-glycoprotein beta-1,6-N-acetylglucosaminyltransferase (GCNT1).